The sequence spans 31 residues: Circulin-B (31 aa).

The segment at residues 1 to 31 is a cross-link (cyclopeptide (Gly-Asn)); it reads GVIPCGESCVFIPCISTLLGCSCKNKVCYRN. Intrachain disulfides connect Cys-5-Cys-21, Cys-9-Cys-23, and Cys-14-Cys-28.

In terms of processing, this is a cyclic peptide.

In terms of biological role, probably participates in a plant defense mechanism. Has antibiotic activity. Inhibits the cytopathic effects and replication of the human immunodeficiency virus. Active against both Gram-positive and Gram-negative bacteria. The polypeptide is Circulin-B (Chassalia parviflora).